The primary structure comprises 243 residues: Adenosylcobinamide-GDP ribazoletransferase (243 aa).

A run of 5 helical transmembrane segments spans residues 31–51 (LLFYPLVGLLFGVILWALNIA), 57–77 (LLLHAALLLAVWVLLSGALHL), 109–129 (IAVVTLVLVLLLKFAALLALI), 135–155 (MALIIVPLIGRAALLGLFLTT), and 188–208 (LVIAGFNAVVALLLAVIVFIW).

This sequence belongs to the CobS family. Requires Mg(2+) as cofactor.

It is found in the cell inner membrane. It carries out the reaction alpha-ribazole + adenosylcob(III)inamide-GDP = adenosylcob(III)alamin + GMP + H(+). It catalyses the reaction alpha-ribazole 5'-phosphate + adenosylcob(III)inamide-GDP = adenosylcob(III)alamin 5'-phosphate + GMP + H(+). The protein operates within cofactor biosynthesis; adenosylcobalamin biosynthesis; adenosylcobalamin from cob(II)yrinate a,c-diamide: step 7/7. Joins adenosylcobinamide-GDP and alpha-ribazole to generate adenosylcobalamin (Ado-cobalamin). Also synthesizes adenosylcobalamin 5'-phosphate from adenosylcobinamide-GDP and alpha-ribazole 5'-phosphate. The sequence is that of Adenosylcobinamide-GDP ribazoletransferase from Pseudomonas fluorescens (strain Pf0-1).